The sequence spans 314 residues: DNA-directed RNA polymerase subunit alpha (314 aa).

The interval 1 to 228 (MIEIEKPNIE…EHLNIFVGLT (228 aa)) is alpha N-terminal domain (alpha-NTD). The interval 245-314 (KEKVLEMTIE…ELGLGLRNEE (70 aa)) is alpha C-terminal domain (alpha-CTD).

This sequence belongs to the RNA polymerase alpha chain family. In terms of assembly, homodimer. The RNAP catalytic core consists of 2 alpha, 1 beta, 1 beta' and 1 omega subunit. When a sigma factor is associated with the core the holoenzyme is formed, which can initiate transcription.

It catalyses the reaction RNA(n) + a ribonucleoside 5'-triphosphate = RNA(n+1) + diphosphate. Its function is as follows. DNA-dependent RNA polymerase catalyzes the transcription of DNA into RNA using the four ribonucleoside triphosphates as substrates. The polypeptide is DNA-directed RNA polymerase subunit alpha (Shouchella clausii (strain KSM-K16) (Alkalihalobacillus clausii)).